Reading from the N-terminus, the 284-residue chain is Tropomyosin (284 aa).

Positions 1 to 38 are disordered; it reads MEAIKKKMQAMKLEKDNAVDRAETAEQQSREAALRAEK. Residues 1 to 284 adopt a coiled-coil conformation; that stretch reads MEAIKKKMQA…DQTFSELTGY (284 aa). Basic and acidic residues predominate over residues 12–38; sequence KLEKDNAVDRAETAEQQSREAALRAEK.

It belongs to the tropomyosin family. In terms of assembly, homodimer.

In terms of biological role, tropomyosin, in association with the troponin complex, plays a central role in the calcium dependent regulation of muscle contraction. In Rhipicephalus microplus (Cattle tick), this protein is Tropomyosin.